The primary structure comprises 94 residues: Putative pterin-4-alpha-carbinolamine dehydratase (94 aa).

This sequence belongs to the pterin-4-alpha-carbinolamine dehydratase family.

It catalyses the reaction (4aS,6R)-4a-hydroxy-L-erythro-5,6,7,8-tetrahydrobiopterin = (6R)-L-erythro-6,7-dihydrobiopterin + H2O. The chain is Putative pterin-4-alpha-carbinolamine dehydratase from Mycobacterium avium (strain 104).